A 90-amino-acid polypeptide reads, in one-letter code: U7-theraphotoxin-Hhn1a 4 (90 aa).

The first 19 residues, 1-19, serve as a signal peptide directing secretion; it reads MKTAIFTVVLALAVFAVLS. Residues 20–50 constitute a propeptide that is removed on maturation; the sequence is FGWEANEEALSEEFTELIHEKEAASETEARE. Disulfide bonds link C51–C65, C58–C70, and C64–C81.

This sequence belongs to the neurotoxin 10 (Hwtx-1) family. 13 (Hntx-13) subfamily. Expressed by the venom gland.

Its subcellular location is the secreted. Its function is as follows. Ion channel inhibitor. The polypeptide is U7-theraphotoxin-Hhn1a 4 (Cyriopagopus hainanus (Chinese bird spider)).